The chain runs to 379 residues: Succinyl-diaminopimelate desuccinylase (379 aa).

H70 contributes to the Zn(2+) binding site. D72 is an active-site residue. D103 serves as a coordination point for Zn(2+). Residue E137 is the Proton acceptor of the active site. Residues E138, E166, and H352 each contribute to the Zn(2+) site.

This sequence belongs to the peptidase M20A family. DapE subfamily. As to quaternary structure, homodimer. Zn(2+) serves as cofactor. The cofactor is Co(2+).

The enzyme catalyses N-succinyl-(2S,6S)-2,6-diaminopimelate + H2O = (2S,6S)-2,6-diaminopimelate + succinate. It participates in amino-acid biosynthesis; L-lysine biosynthesis via DAP pathway; LL-2,6-diaminopimelate from (S)-tetrahydrodipicolinate (succinylase route): step 3/3. In terms of biological role, catalyzes the hydrolysis of N-succinyl-L,L-diaminopimelic acid (SDAP), forming succinate and LL-2,6-diaminopimelate (DAP), an intermediate involved in the bacterial biosynthesis of lysine and meso-diaminopimelic acid, an essential component of bacterial cell walls. This chain is Succinyl-diaminopimelate desuccinylase, found in Burkholderia ambifaria (strain MC40-6).